We begin with the raw amino-acid sequence, 379 residues long: MASLRKSHPLLKIANNALVDLPAPINISAWWNFGSLLGLCLIAQILTGLFLAMHYTSDISTAFSSVAHICRDVNYGWLIRNMHANGASFFFICIYLHIGRGLYYGSYLYKETWNVGVVLLLLVMMTAFVGYVLPWGQMSFWGATVITNLLSAVPYMGDTLVQWIWGGFSVDNATLTRFFAFHFLLPFIGAAATLVHLIFLHETGSNNPTGLNSDADKISFHPYFSYKDILGFTFLLTALIALALFSPNLLGDPENFTPANPLVTPPHIKPEWYFLFAYAILRSIPNKLGGVLALLASILVLMVVPLLHTSKQRSLTFRPFTQVLFWLLIADVAILTWIGGMPVEHPFIIIGQVASFLYFSLFLVLAPTAAWMENKILGW.

The next 4 membrane-spanning stretches (helical) occupy residues 33–53 (FGSLLGLCLIAQILTGLFLAM), 77–98 (WLIRNMHANGASFFFICIYLHI), 113–133 (WNVGVVLLLLVMMTAFVGYVL), and 178–198 (FFAFHFLLPFIGAAATLVHLI). Heme b contacts are provided by H83 and H97. H182 and H196 together coordinate heme b. Residue H201 participates in a ubiquinone binding. Helical transmembrane passes span 226 to 246 (YKDILGFTFLLTALIALALFS), 288 to 308 (LGGVLALLASILVLMVVPLLH), 320 to 340 (FTQVLFWLLIADVAILTWIGG), and 347 to 367 (FIIIGQVASFLYFSLFLVLAP).

Belongs to the cytochrome b family. The cytochrome bc1 complex contains 3 respiratory subunits (MT-CYB, CYC1 and UQCRFS1), 2 core proteins (UQCRC1 and UQCRC2) and probably 6 low-molecular weight proteins. Requires heme b as cofactor.

It is found in the mitochondrion inner membrane. Functionally, component of the ubiquinol-cytochrome c reductase complex (complex III or cytochrome b-c1 complex) that is part of the mitochondrial respiratory chain. The b-c1 complex mediates electron transfer from ubiquinol to cytochrome c. Contributes to the generation of a proton gradient across the mitochondrial membrane that is then used for ATP synthesis. In Poeciliopsis occidentalis (Gila topminnow), this protein is Cytochrome b (mt-cyb).